A 2697-amino-acid chain; its full sequence is MLQQHGISFQMNADRQNKAATTSNRIVSAPATNEFDERHRKQGIDAARALASQYRSRITENRDANQRQAARELSRYVRSELKDEPNTFSDAFLNAIDGRTDIASQSAIYNCMKSNSNIDQKRAGIYLIVCLAETHSGNVIRYANYLLKMLNNGNGLDEDTVKMASKALAFLIATCKSYAAELVDRCLDHCHEWLGQNVPHSQQPKNQQEIDQIRRLAASHLSRELALATPTAFFLRVNLFFKYIFNAVRDKNPAVRIAGIDALHVVLTIVSQREAKNKTEWFKKCFDEALEGQPNPSQKDDLDRWHAVALILNELLRISDQRFELIRCESSQFIKQKFLKEDEEEGVEWLVLTKQQTIVESVTARKLVLERFPKILDCVRQIIPLANKTSSTKQQSSIYLNTVLMQLLPRICAFPQCDRTFQTISFDTSFTILQRNAVAAPAIGMMMLSNPDVHATHIEKTISFISAAIKKTTNSDVLDNYFTFLFLFVDAYHEQVTTQIKAIIPQLMDITLSRSLANVLKMIMMRIPKLRLNVQDGVMASVYQTLTGSLIPPKSEPIGRPASPKAILQKAETDPKELQRIVLAVDVLGEFYFSRGALQRIMQYVADYYLTADNVEIRLAAVSSCCEMVVPFVGVYKKVTSDKRNSLLQTIYGVLRAVCSVIVNDQDVRVRMQVISCFGQMPRPFLAHLAQPEMLEVQFMALHDEKLEMQQACVTLLGRLAELNPALVLPRLRLMLLETLSQMQQSGQARLEQHSAKMIAQLAKQSPKFMRPYVGSLMIAMIPKLRNDQKYAEVTAQVLNAVSEIAVIGGAEIVKNLKPLFEKLTHMINDSSSLHKREAALRAIGGICRSTAYVVDPYRDYPSLLDDLLRILKTVMSNTMRREAIKTLGILGAIDPYTHKVFTGSVQSSTAISTALSLPISETDSKDPRQDIIHWFNYEKCTLEEFYPAITIANLMLMMQDEDSQSYAEIAQAIVTIFRSLGDMAPLYTEQVIPRLIEVCRRATESSNRANLREFFLQQLANFVAIIRKHAAPYMPAIFTIIADAWKEDISVKMVVIEVLTDMGTAIGNDFSKYTGELIPYLLTVLQTDKTKERVLTVKVMESIQKLTHCIVQHLHLVLPPLLIILDDFSLKLSIRNTALSTVLHMTQQVDVSAYAPRMMQSWHHNISTAEMRDKLLLLLIEIIKQLGKFFDIFKRGVDQKLRDYNLDKSVHYEQYRKLAQRAQMSRDVLTSSVFAGSNGNIQYSSTQAGMRGQANNVYANNDLHERLMNGSIDSGASRQDNRDDYYRYGVEEKKEVPKVAPTTARPTSELVTVQITKQRLNKDALMPQWKNENLTSKDEWLQWLMKIRIGFLTYGSSPSLRAASSLGDQHPHLARDLFPAAFMSVWTELDSDVQNDLTSCLLRAISTGIPELIQTILNLAEFMDHSEKGPLPISHDVLGRWAEQTKAFAKACRYKEMSVLKKSGSMQTTFTRKVKLEPNDCQSLITYANKLNVQEEAAGVVRYAERNEMNFQMRGRWYEKLNEWEKALGAYELEEKKKSSCPNLQVYDEKDHLMTPEEAATAEEARMHEMRCLEALGRWDELNSKSVVWADQRGNRNDSVRDEINKKQLDHKMAVIAARGAWAVDNWERMADYVSVISENTQDGAMLRAVVAVHNDENTKAMGLIEKVREMIDSELTAMANESYERAYIPMVSVQQMAELEEAIEYKTRPERRPRIALLWSRRLQGCRRNVEQWQRLIMLRGLVLSPQEMHPLRVKFSSMCRKQGKNSMSRAVLRELLSLPANSDLVRAKAPFDKPLLVLALAKQLYQDDHKDEAIRALEDLANHWNKRINPIPKATGRELIPPSTKEPARICAKVLLKLGEWTELKSKTSNNMQVGELSFVRQQVSPQYRTKESRTPETIAFENTINYYQQATQYDPGWHKVWHKLASTHFYAVCRERPHPTTVISPPQQPQQPKKMHIPPVTRATSPPPPAQKSPQPAPFHSITEPLSVIIDYPVPPPLGSLVGLPPMPAYLSSNSSLPPQHHHVSPLSNDSPSNSAENKLYLKHAAHAVRCFAKALMCSPGSRLEDTLRLMQLWFDHGDDKDQDVYFALTETIFDLPVTTWLEAIPQLMARLDCPDDQKSVQLVLRVLCEIARHRPQAVIYALTVASRSKDVHRSKNAGTVLEKMMEYHSKLVREASLVTEELVRCAILWHEQWHDALDDASRVYFHRRLQDNNVQAMFDALRNMNDLMQKGAPTTMKEHSFQQTYSSDLKEAGRYVQAFESSGNVKDLNQAWEIYCSVFKKLRDQLATLNSLDLVYVSPNLVSAKDLELVVPGTYDPSAPIVSIQSFSSKMNVITSKQRPRKMVIRGSNGLDYQFLLKGHEDPRQDERVMQLFGLVNTLLANNSETCRRNLTIQRYSIVALSKDSGLIGWVPNCDTLHTLVKEYREKKAKIPLSIEHKTLQKLSLETEHLTLMQKLQLFESALSVTQGEDLRHVLWLKSPSSEVWFDRRTNYTRSVACMSMVGYILGLGDRHPSNLMLDRLTGKVVHIDFGDCFEVAMLREKFPERVPFRLTRMLINAMEVTGLDGVYNYTAERVLKMLRTNQESLLAVLEAFVYDPVINWRLVEGMKKDPKTRKDTGGRQNMAGAVLPSSSTTDSIMETIKRKLDGTEFVHTDGSTPPEPLQVTEQLAMLTEQATSPLNLCQSYIGWCPFW.

The interval 1–25 (MLQQHGISFQMNADRQNKAATTSNR) is disordered. HEAT repeat units follow at residues 235–272 (LRVNLFFKYIFNAVRDKNPAVRIAGIDALHVVLTIVSQ), 649–687 (QTIYGVLRAVCSVIVNDQDVRVRMQVISCFGQMPRPFLA), 689–726 (LAQPEMLEVQFMALHDEKLEMQQACVTLLGRLAELNPA), 731–768 (RLRLMLLETLSQMQQSGQARLEQHSAKMIAQLAKQSPK), 815–853 (KNLKPLFEKLTHMINDSSSLHKREAALRAIGGICRSTAY), 863–900 (SLLDDLLRILKTVMSNTMRREAIKTLGILGAIDPYTHK), and 1073–1110 (KYTGELIPYLLTVLQTDKTKERVLTVKVMESIQKLTHC). The region spanning 1438-2153 (VLGRWAEQTK…IYALTVASRS (716 aa)) is the FAT domain. 2 disordered regions span residues 1945–1981 (TVISPPQQPQQPKKMHIPPVTRATSPPPPAQKSPQPA) and 2017–2039 (SNSSLPPQHHHVSPLSNDSPSNS). The span at 1969–1981 (SPPPPAQKSPQPA) shows a compositional bias: pro residues. The span at 2030-2039 (PLSNDSPSNS) shows a compositional bias: polar residues. Residues 2332–2647 (FSSKMNVITS…TTDSIMETIK (316 aa)) form the PI3K/PI4K catalytic domain. The G-loop stretch occupies residues 2338-2344 (VITSKQR). The tract at residues 2512-2520 (GLGDRHPSN) is catalytic loop. The tract at residues 2532–2557 (HIDFGDCFEVAMLREKFPERVPFRLT) is activation loop. The tract at residues 2615–2635 (DPKTRKDTGGRQNMAGAVLPS) is disordered. The 33-residue stretch at 2665 to 2697 (EPLQVTEQLAMLTEQATSPLNLCQSYIGWCPFW) folds into the FATC domain.

Belongs to the PI3/PI4-kinase family. Ubiquitous. Expressed in all major tissues and organs, including the intestine, gonads and hypodermal cells. Expressed in neurons.

It localises to the nucleus. The enzyme catalyses L-seryl-[protein] + ATP = O-phospho-L-seryl-[protein] + ADP + H(+). It catalyses the reaction L-threonyl-[protein] + ATP = O-phospho-L-threonyl-[protein] + ADP + H(+). Serine/threonine-protein kinase that regulates the mRNA translation machinery, probably by modulating the activity of translation factors such as eIF-4G and eIF-2. It may have some protein kinase activity instead of lipid kinase activity. May play a role in P-granule degradation by autophagy in somatic cells during embryogenesis. Required, during larval development, for the establishment of the proper number of germline progenitors, probably upstream of rsks-1 and ife-1. Required for larval development. May act as a mediator of lifespan regulation by insulin signaling and nutrient sensing. This is Target of rapamycin homolog from Caenorhabditis elegans.